Reading from the N-terminus, the 457-residue chain is GTPase Der (457 aa).

EngA-type G domains follow at residues 4–169 (PTIA…PENN) and 177–352 (IMMS…NQHR). Residues 10–17 (GRPNVGKS), 57–61 (DTGGL), 120–123 (NKCE), 183–190 (GRPNVGKS), 230–234 (DTAGI), and 295–298 (NKWD) each bind GTP. The KH-like domain maps to 353–438 (RRVTTSVVNE…PLILLWRGKQ (86 aa)).

The protein belongs to the TRAFAC class TrmE-Era-EngA-EngB-Septin-like GTPase superfamily. EngA (Der) GTPase family. In terms of assembly, associates with the 50S ribosomal subunit.

GTPase that plays an essential role in the late steps of ribosome biogenesis. In Prochlorococcus marinus (strain AS9601), this protein is GTPase Der.